Here is a 211-residue protein sequence, read N- to C-terminus: Riboflavin kinase (211 aa).

The interval 1–85 (MKKILMLIEL…CDKISNALSK (85 aa)) is H-T-H motif-like. The riboflavin kinase stretch occupies residues 86 to 211 (GVIVGEVVSG…GDRVRLEVIQ (126 aa)). CDP is bound at residue 95-100 (GLGEGA). The Mg(2+) site is built by Thr122 and Asn124. FMN-binding residues include Thr178 and Glu186. A CDP-binding site is contributed by 191–194 (VNLR).

This sequence belongs to the archaeal riboflavin kinase family. Mg(2+) serves as cofactor.

It carries out the reaction riboflavin + CTP = CDP + FMN + H(+). Its pathway is cofactor biosynthesis; FMN biosynthesis; FMN from riboflavin (CTP route): step 1/1. Its function is as follows. Catalyzes the CTP-dependent phosphorylation of riboflavin (vitamin B2) to form flavin mononucleotide (FMN). In Thermococcus kodakarensis (strain ATCC BAA-918 / JCM 12380 / KOD1) (Pyrococcus kodakaraensis (strain KOD1)), this protein is Riboflavin kinase (ribK).